Reading from the N-terminus, the 206-residue chain is Probable GTP-binding protein EngB (206 aa).

The EngB-type G domain occupies 27–201; it reads SGIEVAFAGR…EEKLNQWYSK (175 aa). Residues 35 to 42, 62 to 66, 80 to 83, 147 to 150, and 180 to 182 each bind GTP; these read GRSNAGKS, GRTQL, DLPG, TKAD, and FSS. Ser42 and Thr64 together coordinate Mg(2+).

Belongs to the TRAFAC class TrmE-Era-EngA-EngB-Septin-like GTPase superfamily. EngB GTPase family. Mg(2+) is required as a cofactor.

Necessary for normal cell division and for the maintenance of normal septation. This chain is Probable GTP-binding protein EngB, found in Idiomarina loihiensis (strain ATCC BAA-735 / DSM 15497 / L2-TR).